A 153-amino-acid polypeptide reads, in one-letter code: uncharacterized protein (153 aa).

The interval 19–46 is disordered; that stretch reads EKSTRLEEDAMESEPLAGTKTRGRGRRR.

This is an uncharacterized protein from Homo sapiens (Human).